A 531-amino-acid chain; its full sequence is Peptide chain release factor 3 (531 aa).

One can recognise a tr-type G domain in the interval 10–278 (RRRRTFAIIS…SLIDWAPAPK (269 aa)). GTP-binding positions include 19–26 (SHPDAGKT), 87–91 (DTPGH), and 141–144 (NKYD).

This sequence belongs to the TRAFAC class translation factor GTPase superfamily. Classic translation factor GTPase family. PrfC subfamily.

It localises to the cytoplasm. Functionally, increases the formation of ribosomal termination complexes and stimulates activities of RF-1 and RF-2. It binds guanine nucleotides and has strong preference for UGA stop codons. It may interact directly with the ribosome. The stimulation of RF-1 and RF-2 is significantly reduced by GTP and GDP, but not by GMP. In Neisseria gonorrhoeae (strain ATCC 700825 / FA 1090), this protein is Peptide chain release factor 3.